The primary structure comprises 290 residues: UPF0761 membrane protein YihY (290 aa).

Helical transmembrane passes span 44–64 (LLSLVPLVAVVFALFAAFPMF), 104–124 (VGACGLIVTALLLMYSIDSAL), 140–160 (FAVYWMILTLGPLLAGASLAI), 183–203 (IFPLLLSWISFWLLYSIVPTI), 210–230 (AIVGAFVAALLFEAGKKGFAL), and 244–264 (VLAVIPILFVWVYWTWCIVLL).

The protein belongs to the UPF0761 family.

The protein resides in the cell inner membrane. This chain is UPF0761 membrane protein YihY, found in Escherichia coli O139:H28 (strain E24377A / ETEC).